Reading from the N-terminus, the 2217-residue chain is Protein irg-7 (2217 aa).

The signal sequence occupies residues 1-16 (MRNWVLIAALAVICLA). EGF-like domains follow at residues 370-405 (SGSTCSQMLCANGGFLPTPTSDRCQCPEGFSGFHCQ) and 864-896 (TGTYCQNIICYNGGTASGDHCVCPPGYAGESCE). 8 disulfides stabilise this stretch: C379–C393, C395–C404, C868–C873, C886–C895, C1212–C1312, C1285–C1304, C1508–C1521, and C1523–C1532. A C-type lectin domain is found at 1188–1313 (IGQYCIKFMA…CAEPRAFACQ (126 aa)). Residues 1499-1533 (TGSRCTVPICVNGGTRNPDEATCSCPDGYEGPNCQ) form the EGF-like 3 domain. The 187-residue stretch at 2016–2202 (DVVFMIDGSQ…NNQIKTIQQL (187 aa)) folds into the VWFA domain.

The protein resides in the secreted. Plays a role in innate immunity, probably via the atf-7 pathway, to confer resistance to pathogenic bacteria. May also play a role in the regulation of longevity. In Caenorhabditis elegans, this protein is Protein irg-7.